A 204-amino-acid polypeptide reads, in one-letter code: HTH-type transcriptional activator BcrR (204 aa).

Over 1-81 (MEFNEKLQQL…ETENRSNLKK (81 aa)) the chain is Cytoplasmic. The HTH cro/C1-type domain occupies 7–61 (LQQLRTGKNLTQEQLAEQLYVSRTAISKWESGKGYPNMESLKCISKFFSVTIDEL). Positions 18-37 (QEQLAEQLYVSRTAISKWES) form a DNA-binding region, H-T-H motif. Residues 82–102 (IYNYIYGILDMMAVAFIFLPL) form a helical membrane-spanning segment. Topologically, residues 103–126 (YGNSVGGYVYAVNLLSFTATTPFN) are extracellular. A helical transmembrane segment spans residues 127-147 (LAVYWSAFAALIIIGIGKIIS). The Cytoplasmic portion of the chain corresponds to 148-154 (THLDKEK). Residues 155 to 175 (WGGIATKCSLTITALAVCFFA) form a helical membrane-spanning segment. Over 176-181 (AAREPY) the chain is Extracellular. A helical membrane pass occupies residues 182–202 (ITVLVFLLLIGKIFVWIKQMG). At 203 to 204 (MK) the chain is on the cytoplasmic side.

Its subcellular location is the cell membrane. Its activity is regulated as follows. Constitutively bound to the bcrABD promoter. Requires bacitracin for activation, probably through a conformational change, such as the oligomerization of inactive dimers to form active tetramers. In terms of biological role, functions both as a membrane-bound sensor and a transducer of bacitracin availability to activate transcription of the bcrABD operon in the presence of bacitracin. Binds specifically to two inverted repeat sequences on the bcrABD promoter, irrespective of bacitracin concentration. The chain is HTH-type transcriptional activator BcrR from Enterococcus faecalis (Streptococcus faecalis).